Reading from the N-terminus, the 583-residue chain is MGQGESIPSRQIQRDASMQAVSSESENINDSDRQNSGFSRLWNRFPSLQRVLGLRRAKRHRNDEGNSENGNRDRTTERSAFRSRYRGSLLNRNSPSLRSLSPPATPATPRSRIEGESQTSAIPQTDRLILENHQQEFERAARRFRSSIAALRNLNTQNNQSTLASNHEDENVSSSGGQEMQDHGSVNNLESPGTAIGRLPVRSVTSLADSNMEDYTRAVMNYINNSENTQQASVSPEESQLVMLSRFVFSVASGWVSVLMNSSSAHQSNNLEFPSSISGNVESGNVAFDEFLSLLHAGNLVQAMNAETNPRTAELIANAVDLEEESGPINLFRTFRFDNLHRNHEGQEVIPIIIVGIRSLRNSGSDEDDQPSADSPTLMHPSDLISSLVNSQNQTTSVSDNTGPNENVNEAEHISEDEQASTATDVNGISDNNGSSTQQAPETRNNNSQTDHQLPRSWAIYVREAFVPQNHPVLRAPSLFTDSPTYEDMLLLNSIIGIEKPPVASQKDLEKAGGVFPFSGTDERCLVCLSNFELNDECRRLKQCNHFFHRECIDQWLTSSQNSCPLCRTKGVASASTPSSPKP.

Residues 1-38 (MGQGESIPSRQIQRDASMQAVSSESENINDSDRQNSGF) show a composition bias toward polar residues. Disordered stretches follow at residues 1–39 (MGQG…SGFS), 53–124 (GLRR…AIPQ), 156–197 (TQNN…TAIG), and 362–452 (NSGS…QTDH). The segment covering 70 to 80 (GNRDRTTERSA) has biased composition (basic and acidic residues). Residues 88-102 (SLLNRNSPSLRSLSP) are compositionally biased toward low complexity. 4 stretches are compositionally biased toward polar residues: residues 156–165 (TQNNQSTLAS), 172–191 (VSSS…NLES), 384–408 (LISS…NENV), and 420–452 (ASTA…QTDH). The segment at 525–568 (CLVCLSNFELNDECRRLKQCNHFFHRECIDQWLTSSQNSCPLCR) adopts an RING-type zinc-finger fold. S580 bears the Phosphoserine mark.

Its subcellular location is the membrane. This is an uncharacterized protein from Schizosaccharomyces pombe (strain 972 / ATCC 24843) (Fission yeast).